The following is a 469-amino-acid chain: MKPVIALIGRPNVGKSTLFNQITKSRDALVADFAGLTRDRKYGDATYQNKSFIVVDTGGIGESECGIDNYMAEQSKTAINEADIIIFVVDARAGLLASDEQIARELRTLGKKIYLVANKVDGVHAEAALVEFYKLGMGEPLQVAASHGRGVQQMLEDVLQDIPEDENPEEHDKDTGLRLAIIGRPNVGKSTLVNRLLGEDRVVAFDQPGTTRDSIYIPFEREGRKYTLIDTAGVRRKGKVDEMIEKFSIVKTLQAMKDAHVVVVVVDAREGIVEQDLHLIGYALEAGRAMVIAINKWDNMSEYDRKQCKLDVERRFDFIPWARIHLISALHGTGVGELYPSIHRAYESANLKVSPAKLTQILNDATDQHQPPTVQGRRIKMRYAHMGGQNPPTIVIHGNKVDKTPADYRRYLENVFRKVYKLEGTPVKIEFKTSENPFEGRKSQVDERTAARRRRYIQKFKKAEKKFKR.

2 consecutive EngA-type G domains span residues 3–166 (PVIA…PEDE) and 177–350 (LRLA…ESAN). Residues 9 to 16 (GRPNVGKS), 56 to 60 (DTGGI), 118 to 121 (NKVD), 183 to 190 (GRPNVGKS), 230 to 234 (DTAGV), and 295 to 298 (NKWD) each bind GTP. The region spanning 351–435 (LKVSPAKLTQ…PVKIEFKTSE (85 aa)) is the KH-like domain.

This sequence belongs to the TRAFAC class TrmE-Era-EngA-EngB-Septin-like GTPase superfamily. EngA (Der) GTPase family. As to quaternary structure, associates with the 50S ribosomal subunit.

In terms of biological role, GTPase that plays an essential role in the late steps of ribosome biogenesis. The polypeptide is GTPase Der (Acinetobacter baumannii (strain AB0057)).